A 34-amino-acid chain; its full sequence is Cytochrome c oxidase subunit 6B (34 aa).

It belongs to the cytochrome c oxidase subunit 6B family. In terms of assembly, component of the cytochrome c oxidase (complex IV, CIV), a multisubunit enzyme composed of 14 subunits. The complex is composed of a catalytic core of 3 subunits MT-CO1, MT-CO2 and MT-CO3, encoded in the mitochondrial DNA, and 11 supernumerary subunits COX4I, COX5A, COX5B, COX6A, COX6B, COX6C, COX7A, COX7B, COX7C, COX8 and NDUFA4, which are encoded in the nuclear genome. The complex exists as a monomer or a dimer and forms supercomplexes (SCs) in the inner mitochondrial membrane with NADH-ubiquinone oxidoreductase (complex I, CI) and ubiquinol-cytochrome c oxidoreductase (cytochrome b-c1 complex, complex III, CIII), resulting in different assemblies (supercomplex SCI(1)III(2)IV(1) and megacomplex MCI(2)III(2)IV(2)). The N-terminus is blocked.

The protein localises to the mitochondrion inner membrane. It participates in energy metabolism; oxidative phosphorylation. Component of the cytochrome c oxidase, the last enzyme in the mitochondrial electron transport chain which drives oxidative phosphorylation. The respiratory chain contains 3 multisubunit complexes succinate dehydrogenase (complex II, CII), ubiquinol-cytochrome c oxidoreductase (cytochrome b-c1 complex, complex III, CIII) and cytochrome c oxidase (complex IV, CIV), that cooperate to transfer electrons derived from NADH and succinate to molecular oxygen, creating an electrochemical gradient over the inner membrane that drives transmembrane transport and the ATP synthase. Cytochrome c oxidase is the component of the respiratory chain that catalyzes the reduction of oxygen to water. Electrons originating from reduced cytochrome c in the intermembrane space (IMS) are transferred via the dinuclear copper A center (CU(A)) of subunit 2 and heme A of subunit 1 to the active site in subunit 1, a binuclear center (BNC) formed by heme A3 and copper B (CU(B)). The BNC reduces molecular oxygen to 2 water molecules using 4 electrons from cytochrome c in the IMS and 4 protons from the mitochondrial matrix. This chain is Cytochrome c oxidase subunit 6B, found in Thunnus obesus (Bigeye tuna).